The primary structure comprises 102 residues: ATP-dependent Clp protease adapter protein ClpS (102 aa).

Belongs to the ClpS family. In terms of assembly, binds to the N-terminal domain of the chaperone ClpA.

Involved in the modulation of the specificity of the ClpAP-mediated ATP-dependent protein degradation. This chain is ATP-dependent Clp protease adapter protein ClpS, found in Shewanella loihica (strain ATCC BAA-1088 / PV-4).